Here is a 315-residue protein sequence, read N- to C-terminus: Neurogenic differentiation factor 4 (315 aa).

The segment at 39 to 71 is disordered; sequence ERGSIDGEEDDEEEEDGEKPKKRGPKKKKMTKA. Acidic residues predominate over residues 44–55; the sequence is DGEEDDEEEEDG. The segment covering 58–70 has biased composition (basic residues); it reads PKKRGPKKKKMTK. The bHLH domain maps to 78–130; that stretch reads VRRVKANARERSRMHGLNDALENLRRVMPCYSKTQKLSKIETLRLARNYIWAL. A Phosphoserine modification is found at Ser-89.

As to quaternary structure, efficient DNA binding requires dimerization with another bHLH protein. Forms a heterodimer with the bHLH protein hes2, and weakly interacts with hey1/hrt1. In terms of processing, serine or threonine phosphorylation within the basic region may regulate neurogenic activity. In terms of tissue distribution, first expressed weakly at stage 12 in primary neuronal precursors. At stages 18 and 21, strongly expressed in the cranial ganglions, with weaker expression remaining in the spinal cord. Later, strongly expressed at sites of neuronal differentiation, namely the eye, forebrain and cranial ganglions.

The protein localises to the nucleus. Its function is as follows. Probably acts as a transcriptional activator. Mediates neuronal differentiation. Required for the regulation of amacrine cell fate specification in the retina. The protein is Neurogenic differentiation factor 4 (neurod4) of Xenopus laevis (African clawed frog).